Consider the following 901-residue polypeptide: Viral-enhancing factor (901 aa).

The Peptidase M60 domain maps to 27–330; sequence HRRTEVGVVL…IFTWLYNPQR (304 aa). N-linked (GlcNAc...) asparagine; by host glycosylation is found at Asn265, Asn278, Asn339, Asn349, Asn540, Asn594, Asn595, Asn642, Asn683, and Asn698.

In terms of biological role, involved in disruption of the peritrophic membrane and fusion of nucleocapsids with midgut cells. This is Viral-enhancing factor (VEF) from Pseudalatia unipuncta granulosis virus (PuGV).